A 433-amino-acid polypeptide reads, in one-letter code: Serine/threonine-protein kinase KDX1 (433 aa).

In terms of domain architecture, Protein kinase spans 23–318; the sequence is FHLTGKIGRG…VEDALEHPYL (296 aa). ATP is bound by residues 29 to 37 and Lys55; that span reads IGRGSHSLI. Asp153 (proton acceptor) is an active-site residue.

The protein belongs to the protein kinase superfamily. Ser/Thr protein kinase family. Interacts with RLM1.

The enzyme catalyses L-seryl-[protein] + ATP = O-phospho-L-seryl-[protein] + ADP + H(+). It catalyses the reaction L-threonyl-[protein] + ATP = O-phospho-L-threonyl-[protein] + ADP + H(+). Serine/threonine-protein kinase involved in the SLT2 mitogen-activated (MAP) kinase signaling pathway that regulates cell wall integrity. May also be involved in the mating pheromone and the CWI MAPK pathways. In Saccharomyces cerevisiae (strain ATCC 204508 / S288c) (Baker's yeast), this protein is Serine/threonine-protein kinase KDX1 (KDX1).